The following is a 116-amino-acid chain: Glycine-rich protein 3 short isoform (116 aa).

Residues 1-24 (MASKTLLLLGLFAFLFIVSEMAAA) form the signal peptide. The disordered stretch occupies residues 27 to 83 (VKSESEETVKPEQHGGGFGDNGGGRYQGGGGHGGHGGGGYQGGGGRYQGGGGRQGGG). Over residues 29–39 (SESEETVKPEQ) the composition is skewed to basic and acidic residues. Residues 40–83 (HGGGFGDNGGGRYQGGGGHGGHGGGGYQGGGGRYQGGGGRQGGG) show a composition bias toward gly residues. 5 repeat units span residues 54-59 (GGGGHG), 62-67 (GGGGYQ), 68-73 (GGGGRY), 75-80 (GGGGRQ), and 81-86 (GGGGSY). The interval 54–86 (GGGGHGGHGGGGYQGGGGRYQGGGGRQGGGGSY) is 5 X 6 AA tandem repeats of G-G-G-G-[HYRS]-[GYQ].

The protein belongs to the GRP family. As to quaternary structure, interacts with WAK1 (via the extracellular domain). Component of a 500 kDa complex, composed of GRP3 or GRP3-S, WAK1 and KAPP.

It localises to the secreted. Its subcellular location is the extracellular space. The protein resides in the extracellular matrix. Its function is as follows. Regulates the function of the receptor protein kinase WAK1. This is Glycine-rich protein 3 short isoform (GRP3S) from Arabidopsis thaliana (Mouse-ear cress).